A 150-amino-acid chain; its full sequence is Small ribosomal subunit protein uS11y (150 aa).

Positions Glu-129–Leu-150 are disordered. Basic residues predominate over residues Arg-141 to Leu-150.

This sequence belongs to the universal ribosomal protein uS11 family.

The sequence is that of Small ribosomal subunit protein uS11y from Zea mays (Maize).